Here is a 296-residue protein sequence, read N- to C-terminus: Decaprenyl diphosphate synthase (296 aa).

The disordered stretch occupies residues 1 to 24 (MARDARKRTSSNFPQLPPAPDDYP). Asp-76 is a catalytic residue. Asp-76 is a binding site for Mg(2+). Residues 76–80 (DGNGR), Trp-81, Arg-89, His-93, 121–124 (STEN), Trp-125, Arg-127, Arg-168, Arg-244, and 250–252 (RSS) contribute to the substrate site. The Proton acceptor role is filled by Asn-124. Mg(2+) is bound at residue Glu-263. 292 to 294 (RFG) serves as a coordination point for substrate.

The protein belongs to the UPP synthase family. In terms of assembly, homodimer. Mg(2+) serves as cofactor. Mn(2+) is required as a cofactor.

It is found in the cell membrane. The catalysed reaction is (2Z,6E)-farnesyl diphosphate + 7 isopentenyl diphosphate = (2Z,6Z,10Z,14Z,18Z,22Z,26Z,30Z,34E)-decaprenyl diphosphate + 7 diphosphate. It carries out the reaction n isopentenyl diphosphate + (2E,6E)-farnesyl diphosphate = a di-trans,poly-cis-polyprenyl diphosphate + n diphosphate. Activated by dithiothreitol and inhibited by EDTA. Catalyzes the sequential condensation of isopentenyl diphosphate (IPP) in the cis configuration with (2Z,6E)-farnesyl diphosphate (Z-FPP or EZ-FPP) generating the 50 carbon product trans,polycis-decaprenyl diphosphate. When (2E,6E)-farnesyl diphosphate (E-FPP or EE-FPP) is used in vitro, both primary products decaprenyl diphosphate and (2E,6E,10E)-geranylgeranyl diphosphate (EEE-GGPP) are synthesized. M.tuberculosis does not synthesize (2E,6E,10Z)-geranylgeranyl diphosphate (EEZ-GGPP) and heptaprenyl diphosphate. Can also accept many different allylic substrates, including E-geranyl diphosphate (E-GPP), neryl diphosphate (NPP), and all-trans-geranyl-geranyl diphosphate. The polypeptide is Decaprenyl diphosphate synthase (uppS) (Mycobacterium tuberculosis (strain ATCC 25618 / H37Rv)).